Consider the following 111-residue polypeptide: Iron-sulfur cluster assembly protein CyaY (111 aa).

Belongs to the frataxin family.

Functionally, involved in iron-sulfur (Fe-S) cluster assembly. May act as a regulator of Fe-S biogenesis. The sequence is that of Iron-sulfur cluster assembly protein CyaY from Cupriavidus necator (strain ATCC 17699 / DSM 428 / KCTC 22496 / NCIMB 10442 / H16 / Stanier 337) (Ralstonia eutropha).